A 502-amino-acid chain; its full sequence is MSIRAEEISALIKQQIENYQSEIEVSDVGTVIQVGDGIARAHGLDNVMAGELVEFANGVMGLAQNLEENNVGIIILGPYTEIREGDEVRRTGRIMQVPVGEELIGRVVNPLGQPVDGLGPIHTTKTRPIESPAPGVMDRKSVHEPLQTGIKAIDALVPIGRGQRELIIGDRQTGKTAVALDTILNQKDEDMICIYVAIGQKESTVRNVVETLRKHGALEYTIVVTASASQPAPLLYLAPYAGVSMGEEFMYNGKHVLVVYDDLSKQAAAYRELSLLLRRPPGREAYPGDVFYLHSRLLERAAKLSDAKGGGSLTALPFIETQAGDVSAYIPTNVISITDGQIFLQSDLFFSGVRPAIDAGTSVSRVGGSAQIKAMSKVSGTLRLDLASYRELEAFAQFGSDLDKATQAKLNRGARTVEVLKQGLHKPLRVEKQVMILYALTRGFLDDIPVADITRFEEEFYAWLDSNAADLLEEIRTTKKLADDDKFAAAINGFKKVFVASE.

The disordered stretch occupies residues 115–136; sequence VDGLGPIHTTKTRPIESPAPGV. 169-176 contacts ATP; the sequence is GDRQTGKT.

Belongs to the ATPase alpha/beta chains family. In terms of assembly, F-type ATPases have 2 components, CF(1) - the catalytic core - and CF(0) - the membrane proton channel. CF(1) has five subunits: alpha(3), beta(3), gamma(1), delta(1), epsilon(1). CF(0) has three main subunits: a(1), b(2) and c(9-12). The alpha and beta chains form an alternating ring which encloses part of the gamma chain. CF(1) is attached to CF(0) by a central stalk formed by the gamma and epsilon chains, while a peripheral stalk is formed by the delta and b chains.

The protein localises to the cell membrane. It carries out the reaction ATP + H2O + 4 H(+)(in) = ADP + phosphate + 5 H(+)(out). Functionally, produces ATP from ADP in the presence of a proton gradient across the membrane. The alpha chain is a regulatory subunit. The polypeptide is ATP synthase subunit alpha (Bacillus cytotoxicus (strain DSM 22905 / CIP 110041 / 391-98 / NVH 391-98)).